The sequence spans 313 residues: Protein FixB (313 aa).

255 to 283 (LYLAVGISGQIQHMVGANASQTIFAINKD) serves as a coordination point for FAD.

The protein belongs to the ETF alpha-subunit/FixB family. Heterodimer of FixA and FixB.

Its pathway is amine and polyamine metabolism; carnitine metabolism. Its function is as follows. Required for anaerobic carnitine reduction. May bring reductant to CaiA. The polypeptide is Protein FixB (Escherichia coli O8 (strain IAI1)).